The chain runs to 525 residues: GMP synthase [glutamine-hydrolyzing] (525 aa).

A Glutamine amidotransferase type-1 domain is found at 16–205 (PVLVVDFGAQ…LHDFAGLGAQ (190 aa)). Cysteine 93 (nucleophile) is an active-site residue. Active-site residues include histidine 179 and glutamate 181. The 194-residue stretch at 206-399 (WTPANIANAL…LGLPEEIVAR (194 aa)) folds into the GMPS ATP-PPase domain. 233–239 (SGGVDSA) serves as a coordination point for ATP.

Homodimer.

The catalysed reaction is XMP + L-glutamine + ATP + H2O = GMP + L-glutamate + AMP + diphosphate + 2 H(+). It participates in purine metabolism; GMP biosynthesis; GMP from XMP (L-Gln route): step 1/1. Functionally, catalyzes the synthesis of GMP from XMP. The sequence is that of GMP synthase [glutamine-hydrolyzing] (guaA) from Mycobacterium tuberculosis (strain CDC 1551 / Oshkosh).